Here is a 268-residue protein sequence, read N- to C-terminus: Cytochrome c oxidase subunit 3 (268 aa).

The next 7 membrane-spanning stretches (helical) occupy residues 19-39 (PWPI…VLTM), 49-69 (FDLG…DIVI), 85-105 (LIIG…SVFW), 124-144 (PVGI…IILL), 165-185 (SIIG…FQAF), 202-222 (VFFA…LFLF), and 245-265 (ILYW…VYFW).

This sequence belongs to the cytochrome c oxidase subunit 3 family. As to quaternary structure, component of the cytochrome c oxidase (complex IV, CIV), a multisubunit enzyme composed of a catalytic core of 3 subunits and several supernumerary subunits. The complex exists as a monomer or a dimer and forms supercomplexes (SCs) in the inner mitochondrial membrane with ubiquinol-cytochrome c oxidoreductase (cytochrome b-c1 complex, complex III, CIII).

Its subcellular location is the mitochondrion inner membrane. It carries out the reaction 4 Fe(II)-[cytochrome c] + O2 + 8 H(+)(in) = 4 Fe(III)-[cytochrome c] + 2 H2O + 4 H(+)(out). Its function is as follows. Component of the cytochrome c oxidase, the last enzyme in the mitochondrial electron transport chain which drives oxidative phosphorylation. The respiratory chain contains 3 multisubunit complexes succinate dehydrogenase (complex II, CII), ubiquinol-cytochrome c oxidoreductase (cytochrome b-c1 complex, complex III, CIII) and cytochrome c oxidase (complex IV, CIV), that cooperate to transfer electrons derived from NADH and succinate to molecular oxygen, creating an electrochemical gradient over the inner membrane that drives transmembrane transport and the ATP synthase. Cytochrome c oxidase is the component of the respiratory chain that catalyzes the reduction of oxygen to water. Electrons originating from reduced cytochrome c in the intermembrane space (IMS) are transferred via the dinuclear copper A center (CU(A)) of subunit 2 and heme A of subunit 1 to the active site in subunit 1, a binuclear center (BNC) formed by heme A3 and copper B (CU(B)). The BNC reduces molecular oxygen to 2 water molecules using 4 electrons from cytochrome c in the IMS and 4 protons from the mitochondrial matrix. In Schizophyllum commune (Split gill fungus), this protein is Cytochrome c oxidase subunit 3 (COIII).